The sequence spans 564 residues: ATP-dependent RNA helicase ROK1 (564 aa).

2 disordered regions span residues 1 to 45 and 62 to 87; these read MDIF…ESQI and EDDR…DGLI. 3 stretches are compositionally biased toward basic and acidic residues: residues 13-23, 33-45, and 62-86; these read VKKESGPKAKA, DENH…ESQI, and EDDR…DDGL. The Q motif signature appears at 122 to 150; it reads DLISRFSFDKRLLNNLIENGFTEPTPIQC. Positions 153 to 333 constitute a Helicase ATP-binding domain; sequence IPVALNNRDV…QSIMMDPVRV (181 aa). Residue 166 to 173 participates in ATP binding; that stretch reads GPTGSGKT. Residues 280–283 carry the DEAD box motif; sequence DEAD. The Helicase C-terminal domain maps to 344 to 506; sequence NIEQKLIFCG…EVSEWMDKMA (163 aa). Residues 512–564 form a disordered region; it reads EKESIKNGKAHKERKQITTVPKMDKAKRRRQQEMIAASKRRKNEELSKKHFSK. Basic and acidic residues predominate over residues 553-564; that stretch reads KNEELSKKHFSK.

This sequence belongs to the DEAD box helicase family. DDX52/ROK1 subfamily. In terms of assembly, interacts with the U3 snoRNA and is associated with the 90S and 40S pre-ribosomes. This association requires the presence of RRP5. Also interacts with OSH3.

It is found in the nucleus. The protein localises to the nucleolus. It carries out the reaction ATP + H2O = ADP + phosphate + H(+). In terms of biological role, ATP-dependent RNA helicase involved in 40S ribosomal subunit biogenesis. Required for the processing and cleavage of 35S pre-rRNA at sites A0, A1, and A2, leading to mature 18S rRNA. May also have a gene-specific regulatory function since it affects nuclear fusion by regulating KAR4 expression and contributes with KEM1 to ISP-1 sensitivity. In Saccharomyces cerevisiae (strain ATCC 204508 / S288c) (Baker's yeast), this protein is ATP-dependent RNA helicase ROK1 (ROK1).